A 284-amino-acid chain; its full sequence is D-tagatose-1,6-bisphosphate aldolase subunit GatY (284 aa).

The active-site Proton donor is Asp-82. Positions 83 and 180 each coordinate Zn(2+). Gly-181 serves as a coordination point for dihydroxyacetone phosphate. Zn(2+) is bound at residue His-208. Residues 209–211 (GAS) and 230–233 (NVAT) each bind dihydroxyacetone phosphate.

It belongs to the class II fructose-bisphosphate aldolase family. TagBP aldolase GatY subfamily. As to quaternary structure, forms a complex with GatZ. It depends on Zn(2+) as a cofactor.

It catalyses the reaction D-tagatofuranose 1,6-bisphosphate = D-glyceraldehyde 3-phosphate + dihydroxyacetone phosphate. It functions in the pathway carbohydrate metabolism; D-tagatose 6-phosphate degradation; D-glyceraldehyde 3-phosphate and glycerone phosphate from D-tagatose 6-phosphate: step 2/2. Functionally, catalytic subunit of the tagatose-1,6-bisphosphate aldolase GatYZ, which catalyzes the reversible aldol condensation of dihydroxyacetone phosphate (DHAP or glycerone-phosphate) with glyceraldehyde 3-phosphate (G3P) to produce tagatose 1,6-bisphosphate (TBP). Requires GatZ subunit for full activity and stability. Is involved in the catabolism of galactitol. The chain is D-tagatose-1,6-bisphosphate aldolase subunit GatY from Escherichia coli (strain 55989 / EAEC).